The following is a 460-amino-acid chain: V-type ATP synthase beta chain (460 aa).

This sequence belongs to the ATPase alpha/beta chains family.

Functionally, produces ATP from ADP in the presence of a proton gradient across the membrane. The V-type beta chain is a regulatory subunit. The protein is V-type ATP synthase beta chain of Thermotoga neapolitana (strain ATCC 49049 / DSM 4359 / NBRC 107923 / NS-E).